A 389-amino-acid polypeptide reads, in one-letter code: Methionyl-tRNA formyltransferase, mitochondrial (389 aa).

Belongs to the Fmt family.

It localises to the mitochondrion. The catalysed reaction is L-methionyl-tRNA(fMet) + (6R)-10-formyltetrahydrofolate = N-formyl-L-methionyl-tRNA(fMet) + (6S)-5,6,7,8-tetrahydrofolate + H(+). In terms of biological role, methionyl-tRNA formyltransferase that formylates methionyl-tRNA in mitochondria and is crucial for translation initiation. In Homo sapiens (Human), this protein is Methionyl-tRNA formyltransferase, mitochondrial (MTFMT).